The following is a 267-amino-acid chain: Probable beta-lactamase YbxI (267 aa).

The N-terminal stretch at 1 to 23 (MKKWIYVVLVLSIAGIGGFSVHA) is a signal peptide. Residue Ser76 is the Acyl-ester intermediate of the active site. Position 79 is an N6-carboxylysine (Lys79). Substrate is bound at residue 214-216 (KTG).

It belongs to the class-D beta-lactamase family.

The catalysed reaction is a beta-lactam + H2O = a substituted beta-amino acid. This chain is Probable beta-lactamase YbxI (ybxI), found in Bacillus subtilis (strain 168).